Here is a 426-residue protein sequence, read N- to C-terminus: Potassium channel subfamily K member 2 (426 aa).

Over 1 to 61 (MLASASRERP…SAINVMKWKT (61 aa)) the chain is Cytoplasmic. Important for GNG4 binding and L-glutamate release in astrocytes stretches follow at residues 17-38 (AAPD…LSFS) and 51-61 (DSAINVMKWKT). Residues 62 to 82 (VSTIFLVVVLYLIIGATVFKA) traverse the membrane as a helical segment. N-linked (GlcNAc...) asparagine glycosylation is found at Asn110 and Asn134. An intramembrane region (pore-forming) is located at residues 144 to 170 (LGSSFFFAGTVITTIGFGNISPRTEGG). K(+)-binding residues include Thr157, Ile158, Gly159, and Phe160. A selectivity filter 1 region spans residues 157–162 (TIGFGN). A helical transmembrane segment spans residues 172 to 192 (IFCIIYALLGIPLFGFLLAGV). Over 193-222 (GDQLGTIFGKGIAKVEDTFIKWNVSQTKIR) the chain is Cytoplasmic. Residues 223–243 (IISTIIFILFGCVLFVALPAV) traverse the membrane as a helical segment. An intramembrane region (pore-forming) is located at residues 253–283 (ALDAIYFVVITLTTIGFGDYVAGGSDIEYLD). Residues Thr266, Ile267, Gly268, and Phe269 each coordinate K(+). The interval 266–271 (TIGFGD) is selectivity filter 2. Residues 288-308 (VVWFWILVGLAYFAAVLSMIG) traverse the membrane as a helical segment. Topologically, residues 309–426 (DWLRVISKKT…EDIAVIENMK (118 aa)) are cytoplasmic. Positions 313-326 (VISKKTKEEVGEFR) are interaction with AKAP5. Residues 337-385 (TAEFKETRRRLSVEIYDKFQRATSVKRKLSAELAGNHNQELTPCRRTLS) are essential for chloroform and halothane sensitivity. Ser348 carries the post-translational modification Phosphoserine; by PKA.

The protein belongs to the two pore domain potassium channel (TC 1.A.1.8) family. In terms of assembly, homodimer; disulfide-linked. Forms heterodimers with other 2-pore domain K(+) channel subunits, such as KCNK1, KCNK4, KCNK10 and KCNK18. Interacts with AKAP5; the channel is recruited to postsynaptic microdomains by AKAP5 where it can integrate neurotransmitter receptor signals. Part of a complex composed of AKAP5 and ADRB2. Upon AKAP5 binding, the channel is no longer sensitive to intracellular acidification, membrane stretch or arachidonic acid stimuli. Interacts with POPDC1; the interaction enhances KCNK2 surface expression and is inhibited by cAMP. Interacts (via N-terminus) with G-protein subunit GNG4 (via C-terminus); this interaction confers ion selectivity to L-glutamate and Cl(-) anions. Post-translationally, phosphorylation at Ser-348 controls the reversible conversion from a leak channel to a voltage-dependent channel. Expressed in cardiomyocytes (at protein level). Expressed in various brain regions including the lateral olfactory tract, piriform cortex of the forebrain, paraventricular and anteromedial thalamic nuclei, brainstem, caudate putamen, nucleus accumbens, neocortex and interpeduncular nucleus. Detected in astrocytes in hippocampus stratum radiatum. In terms of tissue distribution, expressed in brain and kidney.

The protein localises to the cell membrane. Its subcellular location is the endoplasmic reticulum membrane. The protein resides in the cell projection. It is found in the axon. It localises to the dendrite. The protein localises to the postsynaptic density membrane. Its subcellular location is the sarcolemma. It carries out the reaction K(+)(in) = K(+)(out). The catalysed reaction is L-glutamate(out) = L-glutamate(in). The enzyme catalyses chloride(in) = chloride(out). It catalyses the reaction Rb(+)(in) = Rb(+)(out). It carries out the reaction Cs(+)(in) = Cs(+)(out). Activated by various stimuli including intracellular acidic pH, mechanical stretch and polyunsaturated fatty acids such as arachidonic acid. Functionally, k(+) channel that conducts voltage-dependent outward rectifying currents upon membrane depolarization. Voltage sensing is coupled to K(+) electrochemical gradient in an 'ion flux gating' mode where outward but not inward ion flow opens the gate. Converts to voltage-independent 'leak' conductance mode upon stimulation by various stimuli including mechanical membrane stretch, acidic pH, heat and lipids. Reversibly converts between a voltage-insensitive K(+) 'leak' channel and a voltage-dependent outward rectifying K(+) channel in a phosphorylation-dependent manner. Homo- and heterodimerizes to form functional channels with distinct regulatory and gating properties. In trigeminal ganglia sensory neurons, the heterodimer of KCNK2/TREK-1 and KCNK18/TRESK inhibits neuronal firing and neurogenic inflammation by stabilizing the resting membrane potential at K(+) equilibrium potential as well as by regulating the threshold of action potentials and the spike frequency. At trigeminal A-beta afferent nerves, the heterodimer of KCNK2/TREK-1 and KCNK4/TRAAK is mostly coexpressed at nodes of Ranvier where it conducts voltage-independent mechanosensitive and thermosensitive currents, allowing rapid action potential repolarization, high speed and high frequence saltatory conduction on myelinated nerves to ensure prompt sensory responses. In hippocampal astrocytes, the heterodimer of KCNK2/TREK-1 and KCNK1/TWIK-1 allows passive K(+) conductance under basal conditions, but changes ion selectivity and becomes permeable to L-glutamate and Cl(-) ions upon binding to G-protein subunit GNG4 in stimulated astrocytes. Mediates rapid L-glutamate release in response to activation of G-protein-coupled receptors such as F2R and CNR1. In hippocampal pyramidal neurons, the homodimer of KCNK2/TREK-1 contributes to gamma-aminobutyric acid (GABA) B-induced slow inhibitory postsynaptic potential. Associates with AKAP5 and Gs-protein-coupled receptor B2AR at postsynaptic dense bodies and converts to a leak channel no longer sensitive to stimulation by arachidonic acid, acidic pH or mechanical stress, nor inhibited by Gq-coupled receptors but still under the negative control of Gs-coupled receptors. Permeable to other monovalent cations such as Rb(+) and Cs(+). Its function is as follows. Does not display channel activity but reduces the channel activity of isoform 1, isoform 2 and isoform 4 and reduces cell surface expression of isoform 2. In Rattus norvegicus (Rat), this protein is Potassium channel subfamily K member 2.